Here is a 1068-residue protein sequence, read N- to C-terminus: Receptor-like protein 13 (1068 aa).

Positions 1–23 are cleaved as a signal peptide; sequence MEGKLFLGQYLICVILLLGQLHG. Topologically, residues 24 to 986 are extracellular; it reads YKSCIEKERK…EADESTVDME (963 aa). 2 N-linked (GlcNAc...) asparagine glycosylation sites follow: N59 and N97. LRR repeat units follow at residues 104–129, 139–162, 164–187, 188–212, 216–239, 241–264, 265–290, 292–315, 325–349, 350–373, 375–397, 398–423, 424–447, 448–471, 472–497, 499–517, 519–543, 544–567, and 569–594; these read FEDV…LFDD, LRNL…FLNA, TSLT…EFKD, LTNL…DYNS, FRKL…FLNS, TSLK…ELRD, LTNV…LFAL, KLKA…KFAK, WKNM…LTSL, TGLR…LANL, SLEY…LLAN, LSKL…SWKP, KFQL…LLHQ, KDLH…LLEN, NTKL…AHNL, FLNV…NFGW, LPHL…LDNM, KSIE…FLKG, and YNLT…NFTR. N153 carries N-linked (GlcNAc...) asparagine glycosylation. A glycan (N-linked (GlcNAc...) asparagine) is linked at N202. An N-linked (GlcNAc...) asparagine glycan is attached at N279. N397 carries an N-linked (GlcNAc...) asparagine glycan. 3 N-linked (GlcNAc...) asparagine glycosylation sites follow: N471, N482, and N501. Residues N570 and N591 are each glycosylated (N-linked (GlcNAc...) asparagine). The LRR 20; degenerate repeat unit spans residues 596 to 615; the sequence is WVMSMDNNLFTGNIGKGFRS. LRR repeat units follow at residues 616–639, 641–664, 665–688, 690–710, and 711–734; these read LPSL…WIGE, QGLF…LFNI, SYLQ…VSSI, HGAV…DTLL, and LNVI…INTQ. N663 is a glycosylation site (N-linked (GlcNAc...) asparagine). N700 carries N-linked (GlcNAc...) asparagine glycosylation. N-linked (GlcNAc...) asparagine glycans are attached at residues N735, N745, N771, N780, and N822. LRR repeat units lie at residues 736 to 757 and 758 to 781; these read ISIL…FCSL and SNIQ…LSNT. 4 LRR repeats span residues 846 to 870, 871 to 893, 895 to 918, and 920 to 943; these read LKLL…LGGL, VELE…SFSG, KNVE…LTDM, and SLAV…QFNT. N-linked (GlcNAc...) asparagine glycosylation is found at N877 and N882. 2 N-linked (GlcNAc...) asparagine glycosylation sites follow: N925 and N930. A helical transmembrane segment spans residues 987–1007; sequence SFYWSFVAAYVTILLGILASL. Residues 1008 to 1068 lie on the Cytoplasmic side of the membrane; the sequence is SFDSPWSRAW…PPALFHKTRT (61 aa).

It belongs to the RLP family.

It localises to the cell membrane. This Arabidopsis thaliana (Mouse-ear cress) protein is Receptor-like protein 13.